The primary structure comprises 50 residues: Photosystem II reaction center protein M (50 aa).

Residues 7–27 (GFVASLLFVGIPTIFLIGLFI) form a helical membrane-spanning segment.

It belongs to the PsbM family. As to quaternary structure, PSII is composed of 1 copy each of membrane proteins PsbA, PsbB, PsbC, PsbD, PsbE, PsbF, PsbH, PsbI, PsbJ, PsbK, PsbL, PsbM, PsbT, PsbX, PsbY, Psb30/Ycf12, peripheral proteins PsbO, CyanoQ (PsbQ), PsbU, PsbV and a large number of cofactors. It forms dimeric complexes.

It localises to the cellular thylakoid membrane. In terms of biological role, one of the components of the core complex of photosystem II (PSII). PSII is a light-driven water:plastoquinone oxidoreductase that uses light energy to abstract electrons from H(2)O, generating O(2) and a proton gradient subsequently used for ATP formation. It consists of a core antenna complex that captures photons, and an electron transfer chain that converts photonic excitation into a charge separation. This subunit is found at the monomer-monomer interface. This Prochlorococcus marinus subsp. pastoris (strain CCMP1986 / NIES-2087 / MED4) protein is Photosystem II reaction center protein M.